Reading from the N-terminus, the 233-residue chain is Uridylate kinase (233 aa).

ATP-binding positions include 8–11 (KLSG), G51, and R55. UMP contacts are provided by residues D68 and 129 to 136 (TSNPFFTT). ATP contacts are provided by T156, Y162, and D165.

The protein belongs to the UMP kinase family. Homohexamer.

The protein resides in the cytoplasm. The catalysed reaction is UMP + ATP = UDP + ADP. The protein operates within pyrimidine metabolism; CTP biosynthesis via de novo pathway; UDP from UMP (UMPK route): step 1/1. Inhibited by UTP. Functionally, catalyzes the reversible phosphorylation of UMP to UDP. This chain is Uridylate kinase, found in Thermosipho melanesiensis (strain DSM 12029 / CIP 104789 / BI429).